Reading from the N-terminus, the 215-residue chain is Calcium-binding protein 7 (215 aa).

Topologically, residues 1-188 are cytoplasmic; that stretch reads MPFHPVTAAL…QIRQTCVRKS (188 aa). EF-hand domains follow at residues 33 to 68 and 69 to 104; these read DELEEIREAFKVFDRDGNGFISKQELGTAMRSLGYM and PNEVELEVIIQRLDMDGDGQVDFEEFVTLLGPKLST. Positions 46, 48, 50, 57, 82, 84, 86, 88, and 93 each coordinate Ca(2+). The chain crosses the membrane as a helical; Anchor for type IV membrane protein span at residues 189 to 209; the sequence is LICAFAIAFIISVMLIAANQV. Residues 210–215 lie on the Extracellular side of the membrane; it reads LRSGMK.

Interacts with PI4KB. This binding competes with FREQ/NCS1 binding in a calcium-dependent manner.

Its subcellular location is the golgi apparatus. The protein localises to the trans-Golgi network membrane. It is found in the cytoplasm. The protein resides in the perinuclear region. It localises to the cell membrane. Negatively regulates Golgi-to-plasma membrane trafficking by interacting with PI4KB and inhibiting its activity. This is Calcium-binding protein 7 (CABP7) from Homo sapiens (Human).